A 148-amino-acid chain; its full sequence is Deoxyuridine 5'-triphosphate nucleotidohydrolase (148 aa).

Substrate contacts are provided by residues 68–70, Asn81, 85–87, and Lys95; these read RSG and TID.

This sequence belongs to the dUTPase family. It depends on Mg(2+) as a cofactor.

The enzyme catalyses dUTP + H2O = dUMP + diphosphate + H(+). Its pathway is pyrimidine metabolism; dUMP biosynthesis; dUMP from dCTP (dUTP route): step 2/2. Its function is as follows. This enzyme is involved in nucleotide metabolism: it produces dUMP, the immediate precursor of thymidine nucleotides and it decreases the intracellular concentration of dUTP so that uracil cannot be incorporated into DNA. In Rickettsia massiliae (strain Mtu5), this protein is Deoxyuridine 5'-triphosphate nucleotidohydrolase.